The primary structure comprises 315 residues: FGFR1 oncogene partner 2 homolog (315 aa).

Coiled coils occupy residues 32 to 99 (EEAE…RAME) and 156 to 183 (VVQRELQTISQLRLENETLRELLQISKQ). 2 disordered regions span residues 201-222 (KAVQTDSTADDSADDLSISGAS) and 238-315 (PEQP…APAT). Polar residues predominate over residues 246-269 (GTTNSFNTAPVHSQSETQAPSVTL).

It belongs to the SIKE family.

This is FGFR1 oncogene partner 2 homolog from Drosophila melanogaster (Fruit fly).